We begin with the raw amino-acid sequence, 116 residues long: Aspartate 1-decarboxylase (116 aa).

Serine 25 serves as the catalytic Schiff-base intermediate with substrate; via pyruvic acid. Pyruvic acid (Ser) is present on serine 25. Residue threonine 57 coordinates substrate. Tyrosine 58 functions as the Proton donor in the catalytic mechanism. Residue 73-75 (GAA) participates in substrate binding.

Belongs to the PanD family. Heterooctamer of four alpha and four beta subunits. It depends on pyruvate as a cofactor. Is synthesized initially as an inactive proenzyme, which is activated by self-cleavage at a specific serine bond to produce a beta-subunit with a hydroxyl group at its C-terminus and an alpha-subunit with a pyruvoyl group at its N-terminus.

It localises to the cytoplasm. It catalyses the reaction L-aspartate + H(+) = beta-alanine + CO2. It functions in the pathway cofactor biosynthesis; (R)-pantothenate biosynthesis; beta-alanine from L-aspartate: step 1/1. Its function is as follows. Catalyzes the pyruvoyl-dependent decarboxylation of aspartate to produce beta-alanine. This chain is Aspartate 1-decarboxylase, found in Fervidobacterium nodosum (strain ATCC 35602 / DSM 5306 / Rt17-B1).